The chain runs to 223 residues: Deoxyribose-phosphate aldolase (223 aa).

Asp-89 (proton donor/acceptor) is an active-site residue. The active-site Schiff-base intermediate with acetaldehyde is Lys-152. Lys-181 acts as the Proton donor/acceptor in catalysis.

This sequence belongs to the DeoC/FbaB aldolase family. DeoC type 1 subfamily.

The protein localises to the cytoplasm. It carries out the reaction 2-deoxy-D-ribose 5-phosphate = D-glyceraldehyde 3-phosphate + acetaldehyde. Its pathway is carbohydrate degradation; 2-deoxy-D-ribose 1-phosphate degradation; D-glyceraldehyde 3-phosphate and acetaldehyde from 2-deoxy-alpha-D-ribose 1-phosphate: step 2/2. In terms of biological role, catalyzes a reversible aldol reaction between acetaldehyde and D-glyceraldehyde 3-phosphate to generate 2-deoxy-D-ribose 5-phosphate. The chain is Deoxyribose-phosphate aldolase from Listeria monocytogenes serotype 4b (strain CLIP80459).